Reading from the N-terminus, the 340-residue chain is Phenylalanine--tRNA ligase alpha subunit (340 aa).

Mg(2+) is bound at residue Glu-255.

The protein belongs to the class-II aminoacyl-tRNA synthetase family. Phe-tRNA synthetase alpha subunit type 1 subfamily. As to quaternary structure, tetramer of two alpha and two beta subunits. Requires Mg(2+) as cofactor.

The protein resides in the cytoplasm. It carries out the reaction tRNA(Phe) + L-phenylalanine + ATP = L-phenylalanyl-tRNA(Phe) + AMP + diphosphate + H(+). The sequence is that of Phenylalanine--tRNA ligase alpha subunit from Syntrophomonas wolfei subsp. wolfei (strain DSM 2245B / Goettingen).